The primary structure comprises 374 residues: (R)-phenyllactyl-CoA dehydratase beta subunit (374 aa).

The protein belongs to the FldB/FldC dehydratase alpha/beta subunit family. In terms of assembly, part of the heterotrimeric phenyllactate dehydratase complex FldABC, composed of (R)-phenyllactate CoA-transferase (FldA) and a heterodimeric (R)-phenyllactyl-CoA dehydratase (FldB and FldC). It depends on [4Fe-4S] cluster as a cofactor. Requires No flavin could be detected in the FldABC complex, and the addition of FAD, FMN or riboflavin to the dehydratase do not increase enzymatic activity. as cofactor.

It catalyses the reaction (R)-3-phenyllactoyl-CoA = (E)-cinnamoyl-CoA + H2O. The enzyme catalyses (R)-3-(4-hydroxyphenyl)lactoyl-CoA = (E)-4-coumaroyl-CoA + H2O. It carries out the reaction (R)-3-(indol-3-yl)lactoyl-CoA = (E)-3-(indol-3-yl)acryloyl-CoA + H2O. The protein operates within amino-acid degradation; L-phenylalanine degradation. Its function is as follows. Component of the phenyllactate dehydratase complex FldABC that is involved in the fermentation of L-phenylalanine via a Stickland reaction. This complex catalyzes the reversible syn-dehydration of (R)-phenyllactate to (E)-cinnamate in two steps, a CoA-transfer from cinnamoyl-CoA to phenyllactate, catalyzed by FldA, followed by the dehydration of phenyllactyl-CoA to cinnamoyl-CoA, catalyzed by FldB and FldC. Requires the activator FldI to initiate catalysis. This Clostridium sporogenes protein is (R)-phenyllactyl-CoA dehydratase beta subunit.